The sequence spans 347 residues: Ubiquinone biosynthesis protein coq-4, mitochondrial (347 aa).

The N-terminal 49 residues, 1–49 (MEVTALRRSAALVARASSQNAIRPAVCAAISSTSPTPPTQIQTQQTRQF), are a transit peptide targeting the mitochondrion. The Zn(2+) site is built by histidine 185, aspartate 186, histidine 189, and glutamate 201. Residues 284–310 (IRKREREEKRRRKEMERMLSGRGTEDV) form a disordered region.

This sequence belongs to the COQ4 family. Component of a multi-subunit COQ enzyme complex, composed of at least coq-3, coq-4, coq-5, coq-6, coq-7 and coq-9. The cofactor is Zn(2+).

It is found in the mitochondrion inner membrane. It catalyses the reaction a 4-hydroxy-3-methoxy-5-(all-trans-polyprenyl)benzoate + H(+) = a 2-methoxy-6-(all-trans-polyprenyl)phenol + CO2. It functions in the pathway cofactor biosynthesis; ubiquinone biosynthesis. Lyase that catalyzes the C1-decarboxylation of 4-hydroxy-3-methoxy-5-(all-trans-polyprenyl)benzoic acid into 2-methoxy-6-(all-trans-polyprenyl)phenol during ubiquinone biosynthesis. The chain is Ubiquinone biosynthesis protein coq-4, mitochondrial from Neurospora crassa (strain ATCC 24698 / 74-OR23-1A / CBS 708.71 / DSM 1257 / FGSC 987).